Consider the following 37-residue polypeptide: Large ribosomal subunit protein bL36 (37 aa).

It belongs to the bacterial ribosomal protein bL36 family.

The sequence is that of Large ribosomal subunit protein bL36 from Mycoplasma genitalium (strain ATCC 33530 / DSM 19775 / NCTC 10195 / G37) (Mycoplasmoides genitalium).